The primary structure comprises 105 residues: MTLRDLINKLLGRETSSANTARERLQLVLAHDRVDMSSLTTDLLDKMRKEILDVVAKYVEIDFEEVAVSLETEDRMTALVANLPIKRTLTGEIEFKKNHDNPKKK.

This sequence belongs to the MinE family.

Functionally, prevents the cell division inhibition by proteins MinC and MinD at internal division sites while permitting inhibition at polar sites. This ensures cell division at the proper site by restricting the formation of a division septum at the midpoint of the long axis of the cell. This chain is Cell division topological specificity factor, found in Prochlorococcus marinus (strain MIT 9515).